We begin with the raw amino-acid sequence, 561 residues long: Malto-oligosyltrehalose trehalohydrolase (561 aa).

Position 253-258 (253-258 (RLDAVH)) interacts with substrate. Asp-255 acts as the Nucleophile in catalysis. Catalysis depends on Glu-286, which acts as the Proton donor. Substrate-binding positions include 311 to 315 (DDFHH) and 379 to 384 (HDQVGN).

It belongs to the glycosyl hydrolase 13 family. Homodimer.

Its subcellular location is the cytoplasm. It carries out the reaction hydrolysis of (1-&gt;4)-alpha-D-glucosidic linkage in 4-alpha-D-[(1-&gt;4)-alpha-D-glucanosyl]n trehalose to yield trehalose and (1-&gt;4)-alpha-D-glucan.. It functions in the pathway glycan biosynthesis; trehalose biosynthesis. This is Malto-oligosyltrehalose trehalohydrolase (treZ) from Saccharolobus solfataricus (strain ATCC 35092 / DSM 1617 / JCM 11322 / P2) (Sulfolobus solfataricus).